The sequence spans 185 residues: Probable nicotinate-nucleotide adenylyltransferase (185 aa).

The protein belongs to the NadD family.

It carries out the reaction nicotinate beta-D-ribonucleotide + ATP + H(+) = deamido-NAD(+) + diphosphate. It participates in cofactor biosynthesis; NAD(+) biosynthesis; deamido-NAD(+) from nicotinate D-ribonucleotide: step 1/1. In terms of biological role, catalyzes the reversible adenylation of nicotinate mononucleotide (NaMN) to nicotinic acid adenine dinucleotide (NaAD). In Cereibacter sphaeroides (strain ATCC 17025 / ATH 2.4.3) (Rhodobacter sphaeroides), this protein is Probable nicotinate-nucleotide adenylyltransferase.